The following is a 241-amino-acid chain: Leucyl/phenylalanyl-tRNA--protein transferase (241 aa).

The protein belongs to the L/F-transferase family.

The protein resides in the cytoplasm. It carries out the reaction N-terminal L-lysyl-[protein] + L-leucyl-tRNA(Leu) = N-terminal L-leucyl-L-lysyl-[protein] + tRNA(Leu) + H(+). The catalysed reaction is N-terminal L-arginyl-[protein] + L-leucyl-tRNA(Leu) = N-terminal L-leucyl-L-arginyl-[protein] + tRNA(Leu) + H(+). It catalyses the reaction L-phenylalanyl-tRNA(Phe) + an N-terminal L-alpha-aminoacyl-[protein] = an N-terminal L-phenylalanyl-L-alpha-aminoacyl-[protein] + tRNA(Phe). In terms of biological role, functions in the N-end rule pathway of protein degradation where it conjugates Leu, Phe and, less efficiently, Met from aminoacyl-tRNAs to the N-termini of proteins containing an N-terminal arginine or lysine. This is Leucyl/phenylalanyl-tRNA--protein transferase from Neisseria meningitidis serogroup A / serotype 4A (strain DSM 15465 / Z2491).